Here is a 103-residue protein sequence, read N- to C-terminus: Matrix Gla protein (103 aa).

The N-terminal stretch at 1-19 (MKSLVLLAILAALAVVTLC) is a signal peptide. Glu21 bears the 4-carboxyglutamate mark. A phosphoserine mark is found at Ser22, Ser25, and Ser28. The region spanning 51-97 (RAKVQERIRERSKPVHELNREACDDYRLCERYAMVYGYNAAYNRYFR) is the Gla domain. 4-carboxyglutamate is present on residues Glu56, Glu60, Glu67, and Glu71. A disulfide bridge connects residues Cys73 and Cys79. Residues 97–103 (RERRGAK) constitute a propeptide, removed in mature form; probably by carboxypeptidase N.

It belongs to the osteocalcin/matrix Gla protein family. Post-translationally, requires vitamin K-dependent gamma-carboxylation for its function.

Its subcellular location is the secreted. Functionally, associates with the organic matrix of bone and cartilage. Thought to act as an inhibitor of bone formation. This Pongo abelii (Sumatran orangutan) protein is Matrix Gla protein (MGP).